A 620-amino-acid chain; its full sequence is Probable potassium transport system protein Kup (620 aa).

A run of 12 helical transmembrane segments spans residues 7-27 (LALAALGVVFGDIGTSPLYAI), 44-64 (VFGVLSLLVWSLLLIVSLKYL), 98-118 (FFLIAIGLFGAALLYGDGMIT), 135-155 (PAFHDLIIPATVTVLVILFLF), 166-186 (LFGPVILLWFVVLGVLGLVEI), 201-221 (GIMFLLNNQLHGFMVLGAVFL), 245-265 (WAFLVLPALLLNYFGQGALLL), 278-298 (LVPSWGLIPMVILSTSATIIA), 335-355 (IYVPAANWSLMVATISLVIGF), 361-381 (LAAAYGVAVTATMLISTILFY), 394-414 (VLNVMIVVFLLVDLAFFGASA), and 417-437 (LFHGAWFPLVIAAVMFTVMMT).

Belongs to the HAK/KUP transporter (TC 2.A.72) family.

It localises to the cell inner membrane. The enzyme catalyses K(+)(in) + H(+)(in) = K(+)(out) + H(+)(out). Transport of potassium into the cell. Likely operates as a K(+):H(+) symporter. The polypeptide is Probable potassium transport system protein Kup (Chlorobium chlorochromatii (strain CaD3)).